Consider the following 430-residue polypeptide: tRNA(Ile)-lysidine synthase (430 aa).

24–29 serves as a coordination point for ATP; the sequence is SGGLDS.

Belongs to the tRNA(Ile)-lysidine synthase family.

It is found in the cytoplasm. The enzyme catalyses cytidine(34) in tRNA(Ile2) + L-lysine + ATP = lysidine(34) in tRNA(Ile2) + AMP + diphosphate + H(+). In terms of biological role, ligates lysine onto the cytidine present at position 34 of the AUA codon-specific tRNA(Ile) that contains the anticodon CAU, in an ATP-dependent manner. Cytidine is converted to lysidine, thus changing the amino acid specificity of the tRNA from methionine to isoleucine. In Haemophilus influenzae (strain PittGG), this protein is tRNA(Ile)-lysidine synthase.